Consider the following 471-residue polypeptide: O-acetyltransferase astG (471 aa).

Belongs to the fumigaclavine B O-acetyltransferase family. As to quaternary structure, monomer.

It carries out the reaction dideacetyl astellolide A + acetyl-CoA = 14-deacetyl astellolide A + CoA. It catalyses the reaction dideacetyl astellolide B + acetyl-CoA = 14-deacetyl astellolide B + CoA. The protein operates within secondary metabolite biosynthesis; terpenoid biosynthesis. In terms of biological role, O-acetyltransferase; part of the gene cluster that mediates the biosynthesis of astellolides, drimane-type sesquiterpene esters that show antimicrobial, anti-inflammatory, and anti-tumor activities. The first step in astellolide biosynthesis is performed by the sesquiterpene cyclase astC that catalyzes the formation of drimanyl pyrophosphate from farnesyl pyrophosphate. Drimanyl pyrophosphate is then dephosphorylated by the sesquiterpene phosphatase astI to produce drimanyl monophosphate which is further dephosphorylated to drim-8-ene-11-ol by atsK. Drim-8-ene-11-ol is converted to confertifolin, probably by the cytochrome P450 monooxygenase astD and/or the dehydrogenase astE. The cytochrome P450 monooxygenases astB, astF and astJ then hydroxylate confertifolin at C6, C14, or C15 to form trihydroxy confertifolin. The nonribosomal peptide synthetase astA catalyzes ester bond formation between trihydroxy contifolin and benzoic acid (BA) or 4-hydroxy benzoic acid (4HBA), leading to the formation of dideacetyl astellolides A and B, respectively. Finally, the O-acetyltransferase astG converts dideacetyl astellolides A and B into deacetyl astellolides A and B. The protein is O-acetyltransferase astG of Aspergillus oryzae (strain ATCC 42149 / RIB 40) (Yellow koji mold).